Here is a 268-residue protein sequence, read N- to C-terminus: Protein MGF 300-1L (268 aa).

Over 1 to 175 the chain is Cytoplasmic; the sequence is MVSLTTYCLK…QTFKTFYAKN (175 aa). The helical transmembrane segment at 176–193 threads the bilayer; sequence YSLSTLYCIFLAIYYKLY. Over 194-268 the chain is Extracellular; that stretch reads MALRKMVKIY…MYAFSQNNFW (75 aa).

The protein belongs to the asfivirus MGF 300 family.

The protein localises to the host membrane. In terms of biological role, plays a role in virus cell tropism, and may be required for efficient virus replication in macrophages. The polypeptide is Protein MGF 300-1L (African swine fever virus (isolate Tick/Malawi/Lil 20-1/1983) (ASFV)).